A 504-amino-acid polypeptide reads, in one-letter code: uncharacterized protein (504 aa).

A helical transmembrane segment spans residues 26–46; that stretch reads ILFLLLGLIILVNISINVTTV. The segment covering 103 to 112 has biased composition (polar residues); it reads PTQCSSSSTH. Disordered stretches follow at residues 103-180, 313-402, and 431-504; these read PTQC…TRPM, YDAR…PLTT, and QRLA…GKLN. Residues 113 to 128 show a composition bias toward basic residues; that stretch reads YFRKHSNDRRSRRRYC. Polar residues predominate over residues 135–147; the sequence is QIRQSNQQQSCHS. Over residues 313–324 the composition is skewed to basic and acidic residues; it reads YDARDQWRRGTE. Positions 349 to 377 are enriched in polar residues; it reads SSQAHRQNFPSYTHSQPNHSPPQSVGYSS. Composition is skewed to basic and acidic residues over residues 378–389 and 467–478; these read RESHEVRRRAPD and LELKRQVQENRG. Positions 494 to 504 are enriched in basic residues; that stretch reads SLHRSRTGKLN.

The protein resides in the membrane. This is an uncharacterized protein from Rattus norvegicus (Rat).